A 357-amino-acid polypeptide reads, in one-letter code: Peptide chain release factor 1 (357 aa).

The residue at position 234 (Q234) is an N5-methylglutamine.

The protein belongs to the prokaryotic/mitochondrial release factor family. Post-translationally, methylated by PrmC. Methylation increases the termination efficiency of RF1.

It localises to the cytoplasm. Functionally, peptide chain release factor 1 directs the termination of translation in response to the peptide chain termination codons UAG and UAA. This is Peptide chain release factor 1 from Chlorobaculum tepidum (strain ATCC 49652 / DSM 12025 / NBRC 103806 / TLS) (Chlorobium tepidum).